The sequence spans 234 residues: Fibronectin type III domain-containing protein 4 (234 aa).

The signal sequence occupies residues 1 to 44; that stretch reads MPSGCHSSPPSGLRGDMASLVPLSPYLSPTVLLLVSCDLGFVRA. Residues 45–167 are Extracellular-facing; that stretch reads DRPPSPVNVT…GLDGERPLQT (123 aa). The region spanning 47-140 is the Fibronectin type-III domain; the sequence is PPSPVNVTVT…PRVHFRTLKG (94 aa). N-linked (GlcNAc...) asparagine glycans are attached at residues N52, N97, and N147. The disordered stretch occupies residues 122-160; the sequence is GLRGESPPGPRVHFRTLKGSDRLPSNSSSPGDITVEGLD. Residues 168-188 form a helical membrane-spanning segment; that stretch reads GEVVIIVVVLLMWAAVIGLFC. Over 189 to 234 the chain is Cytoplasmic; sequence RQYDIIKDNDSNNNPKEKGKGPEQSPQGRPVGTRQKKSPSINTIDV. Basic and acidic residues predominate over residues 197 to 209; it reads NDSNNNPKEKGKG. The segment at 197 to 234 is disordered; the sequence is NDSNNNPKEKGKGPEQSPQGRPVGTRQKKSPSINTIDV.

As to expression, highly expressed in the liver and the brain, including in the cortex, hypothalamus and hippocampus. Also expressed in adipose tissue.

The protein localises to the membrane. It localises to the secreted. Its function is as follows. Has anti-inflammatory properties. In the colon, acts on macrophages to down-regulate inflammation. May suppress osteoclastogenesis and mature osteoclast resorptive function. In white adipose tissue, decreases local inflammation, via interaction with GPR116. Also required for proper systemic glucose tolerance, specifically sensitizing white adipocytes to insulin and promoting glucose uptake. The insulin sensitizing function in adipose tissue is mediated by interaction with ADGRF5/GPR116 and activation of cAMP signaling. This chain is Fibronectin type III domain-containing protein 4 (FNDC4), found in Homo sapiens (Human).